The following is a 284-amino-acid chain: MMFEKDDLGLSLGLNFPKKQINLKSNPSVSVTPSSSSFGLFRRSSWNESFTSSVPNSDSSQKETRTFIRGIDVNRPPSTAEYGDEDAGVSSPNSTVSSSTGKRSEREEDTDPQGSRGISDDEDGDNSRKKLRLSKDQSAILEETFKDHSTLNPKQKQALAKQLGLRARQVEVWFQNRRARTKLKQTEVDCEFLRRCCENLTEENRRLQKEVTELRALKLSPQFYMHMSPPTTLTMCPSCEHVSVPPPQPQAATSAHHRSLPVNAWAPATRISHGLTFDALRPRS.

Residues 48–59 are compositionally biased toward polar residues; the sequence is ESFTSSVPNSDS. Residues 48-132 are disordered; the sequence is ESFTSSVPNS…DGDNSRKKLR (85 aa). Low complexity predominate over residues 89–100; sequence VSSPNSTVSSST. A DNA-binding region (homeobox) is located at residues 126–185; it reads NSRKKLRLSKDQSAILEETFKDHSTLNPKQKQALAKQLGLRARQVEVWFQNRRARTKLKQ. The leucine-zipper stretch occupies residues 193–214; the sequence is LRRCCENLTEENRRLQKEVTEL.

The protein belongs to the HD-ZIP homeobox family. Class II subfamily. In terms of assembly, interacts with DNA as homodimer. As to expression, predominantly expressed in leaves and stems.

The protein resides in the nucleus. Functionally, probable transcription factor involved in the negative regulation of cell elongation and specific cell proliferation processes such as lateral root formation and secondary growth of the vascular system. Acts as a mediator of the red/far-red light effects on leaf cell expansion in the shading response. Binds to the DNA sequence 5'-CAAT[GC]ATTG-3'. Negatively regulates its own expression. This chain is Homeobox-leucine zipper protein HAT4 (HAT4), found in Arabidopsis thaliana (Mouse-ear cress).